A 293-amino-acid chain; its full sequence is Ribosomal protein L11 methyltransferase (293 aa).

Threonine 145, glycine 166, aspartate 188, and asparagine 230 together coordinate S-adenosyl-L-methionine.

This sequence belongs to the methyltransferase superfamily. PrmA family.

Its subcellular location is the cytoplasm. The catalysed reaction is L-lysyl-[protein] + 3 S-adenosyl-L-methionine = N(6),N(6),N(6)-trimethyl-L-lysyl-[protein] + 3 S-adenosyl-L-homocysteine + 3 H(+). Its function is as follows. Methylates ribosomal protein L11. The chain is Ribosomal protein L11 methyltransferase from Shewanella baltica (strain OS155 / ATCC BAA-1091).